We begin with the raw amino-acid sequence, 979 residues long: Mast/stem cell growth factor receptor Kit (979 aa).

The first 27 residues, 1-27 (MRGARGAWDFLCVLLLLLLLGVQTGSS), serve as a signal peptide directing secretion. At 28-527 (QPSVSPGEPS…QIHPHTLFTP (500 aa)) the chain is on the extracellular side. Ig-like C2-type domains are found at residues 29-114 (PSVS…VFVR), 123-207 (DLPL…LKVR), 214-311 (PVVS…LEVV), 320-413 (PMMS…VYVN), and 416-510 (PEIL…FNFA). C60 and C99 form a disulfide bridge. N96, N132, and N147 each carry an N-linked (GlcNAc...) asparagine glycan. Cystine bridges form between C138–C188, C153–C185, and C235–C293. N-linked (GlcNAc...) asparagine glycans are attached at residues N286, N296, N303, N355, N370, N403, N466, and N489. Cysteines 431 and 494 form a disulfide. Residues 528 to 548 (LLIGFVIAAGMMCIIVMILTY) traverse the membrane as a helical segment. The Cytoplasmic segment spans residues 549 to 979 (KYLQKPMYEV…TQPLLVHEDV (431 aa)). Phosphotyrosine; by autocatalysis occurs at positions 550, 556, 571, and 573. A Mg(2+)-binding site is contributed by Y571. Residues 571–573 (YVY) are important for interaction with phosphotyrosine-binding proteins. Residues 592-940 (LSFGKTLGAG…ISDSTNHIYS (349 aa)) enclose the Protein kinase domain. ATP is bound by residues 599–606 (GAGAFGKV), K626, and 674–680 (EYCCYGD). Phosphotyrosine; by autocatalysis occurs at positions 706, 724, and 733. S744 and S749 each carry phosphoserine; by PKC/PRKCA. Catalysis depends on D795, which acts as the Proton acceptor. An ATP-binding site is contributed by R799. Mg(2+) contacts are provided by N800 and D813. S824 is subject to Phosphoserine. The residue at position 826 (Y826) is a Phosphotyrosine; by autocatalysis. S894 is subject to Phosphoserine. Phosphotyrosine; by autocatalysis occurs at positions 903 and 939. The residue at position 962 (S962) is a Phosphoserine.

Belongs to the protein kinase superfamily. Tyr protein kinase family. CSF-1/PDGF receptor subfamily. As to quaternary structure, monomer in the absence of bound KITLG/SCF. Homodimer in the presence of bound KITLG/SCF, forming a heterotetramer with two KITLG/SCF molecules. Interacts (via phosphorylated tyrosine residues) with the adapter proteins GRB2 and GRB7 (via SH2 domain), and SH2B2/APS. Interacts (via C-terminus) with MPDZ (via the tenth PDZ domain). Interacts (via phosphorylated tyrosine residues) with PIK3R1 and PIK3 catalytic subunit. Interacts (via phosphorylated tyrosine) with CRK (isoform Crk-II), FYN, SHC1 and MATK/CHK (via SH2 domain). Interacts with LYN and FES/FPS. Interacts (via phosphorylated tyrosine residues) with the protein phosphatases PTPN6/SHP-1 (via SH2 domain), PTPN11/SHP-2 (via SH2 domain) and PTPRU. Interacts with PLCG1. Interacts with DOK1 and TEC. Interacts with IL1RAP (independent of stimulation with KITLG/SCF). A mast cell-specific KITLG/SCF-induced interleukin-33 signaling complex contains IL1RL1, IL1RAP, KIT and MYD88. Post-translationally, ubiquitinated by SOCS6. KIT is rapidly ubiquitinated after autophosphorylation induced by KITLG/SCF binding, leading to internalization and degradation. In terms of processing, autophosphorylated on tyrosine residues. KITLG/SCF binding promotes autophosphorylation. Phosphorylated tyrosine residues are important for interaction with specific binding partners.

It localises to the cell membrane. It catalyses the reaction L-tyrosyl-[protein] + ATP = O-phospho-L-tyrosyl-[protein] + ADP + H(+). With respect to regulation, present in an inactive conformation in the absence of bound ligand. KITLG/SCF binding leads to dimerization and activation by autophosphorylation on tyrosine residues. Activity is down-regulated by PRKCA-mediated phosphorylation on serine residues. Its function is as follows. Tyrosine-protein kinase that acts as a cell-surface receptor for the cytokine KITLG/SCF and plays an essential role in the regulation of cell survival and proliferation, hematopoiesis, stem cell maintenance, gametogenesis, mast cell development, migration and function, and in melanogenesis. In response to KITLG/SCF binding, KIT can activate several signaling pathways. Phosphorylates PIK3R1, PLCG1, SH2B2/APS and CBL. Activates the AKT1 signaling pathway by phosphorylation of PIK3R1, the regulatory subunit of phosphatidylinositol 3-kinase. Activated KIT also transmits signals via GRB2 and activation of RAS, RAF1 and the MAP kinases MAPK1/ERK2 and/or MAPK3/ERK1. Promotes activation of STAT family members STAT1, STAT3, STAT5A and STAT5B. Activation of PLCG1 leads to the production of the cellular signaling molecules diacylglycerol and inositol 1,4,5-trisphosphate. KIT signaling is modulated by protein phosphatases, and by rapid internalization and degradation of the receptor. Activated KIT promotes phosphorylation of the protein phosphatases PTPN6/SHP-1 and PTPRU, and of the transcription factors STAT1, STAT3, STAT5A and STAT5B. Promotes phosphorylation of PIK3R1, CBL, CRK (isoform Crk-II), LYN, MAPK1/ERK2 and/or MAPK3/ERK1, PLCG1, SRC and SHC1. The chain is Mast/stem cell growth factor receptor Kit (KIT) from Canis lupus familiaris (Dog).